The sequence spans 166 residues: Endoribonuclease YbeY (166 aa).

Histidine 136, histidine 140, and histidine 146 together coordinate Zn(2+).

This sequence belongs to the endoribonuclease YbeY family. Zn(2+) serves as cofactor.

The protein localises to the cytoplasm. Its function is as follows. Single strand-specific metallo-endoribonuclease involved in late-stage 70S ribosome quality control and in maturation of the 3' terminus of the 16S rRNA. The sequence is that of Endoribonuclease YbeY from Synechococcus sp. (strain CC9605).